A 318-amino-acid chain; its full sequence is MNMNSLSVSRVLADLAGKDFISCSDFTSDQVKALLQLSSQLKNGDRRIDLGNRVLGLIFSKASTRTRVSFQVAMARLGGQTIDLSNQATQLARGEPLKDTARVLSRYCDALALRTFGNDELIEYAKWSSIPVINALTDLEHPCQALADFLTIKEAFGSLDGITLAYIGDGNNVLNSLMICGTLLGVNIQIASPKGFEPLPSIVERAKTLAHPTLKICVSNNPIDAVSGAHVIYTDVWASMGQESEQAQRKEIFEGYTVNKDLVDKAEKESIILHCLPAHRGEEITDDVLESSASRIFDQAENRLHVQQALLAALLGGL.

Carbamoyl phosphate contacts are provided by residues 63–66, Q90, R114, and 141–144; these read STRT and HPCQ. L-ornithine contacts are provided by residues N172, D235, and 239-240; that span reads SM. Carbamoyl phosphate is bound by residues 275 to 276 and R303; that span reads CL.

It belongs to the aspartate/ornithine carbamoyltransferase superfamily. OTCase family.

It is found in the cytoplasm. It catalyses the reaction carbamoyl phosphate + L-ornithine = L-citrulline + phosphate + H(+). Its pathway is amino-acid biosynthesis; L-arginine biosynthesis; L-arginine from L-ornithine and carbamoyl phosphate: step 1/3. Functionally, reversibly catalyzes the transfer of the carbamoyl group from carbamoyl phosphate (CP) to the N(epsilon) atom of ornithine (ORN) to produce L-citrulline. This is Ornithine carbamoyltransferase from Prochlorococcus marinus (strain SARG / CCMP1375 / SS120).